The following is a 364-amino-acid chain: tRNA-specific 2-thiouridylase MnmA (364 aa).

ATP-binding positions include 13 to 20 (GMSGGVDS) and M39. The segment at 99–101 (NPD) is interaction with target base in tRNA. C104 acts as the Nucleophile in catalysis. Cysteines 104 and 200 form a disulfide. Position 128 (G128) interacts with ATP. Residues 150-152 (KDQ) are interaction with tRNA. The active-site Cysteine persulfide intermediate is C200. Residues 310–311 (RY) are interaction with tRNA.

It belongs to the MnmA/TRMU family.

Its subcellular location is the cytoplasm. It carries out the reaction S-sulfanyl-L-cysteinyl-[protein] + uridine(34) in tRNA + AH2 + ATP = 2-thiouridine(34) in tRNA + L-cysteinyl-[protein] + A + AMP + diphosphate + H(+). In terms of biological role, catalyzes the 2-thiolation of uridine at the wobble position (U34) of tRNA, leading to the formation of s(2)U34. This is tRNA-specific 2-thiouridylase MnmA from Alkaliphilus oremlandii (strain OhILAs) (Clostridium oremlandii (strain OhILAs)).